The primary structure comprises 237 residues: Phosphoribosylaminoimidazole-succinocarboxamide synthase (237 aa).

It belongs to the SAICAR synthetase family.

It carries out the reaction 5-amino-1-(5-phospho-D-ribosyl)imidazole-4-carboxylate + L-aspartate + ATP = (2S)-2-[5-amino-1-(5-phospho-beta-D-ribosyl)imidazole-4-carboxamido]succinate + ADP + phosphate + 2 H(+). It functions in the pathway purine metabolism; IMP biosynthesis via de novo pathway; 5-amino-1-(5-phospho-D-ribosyl)imidazole-4-carboxamide from 5-amino-1-(5-phospho-D-ribosyl)imidazole-4-carboxylate: step 1/2. This Shigella boydii serotype 4 (strain Sb227) protein is Phosphoribosylaminoimidazole-succinocarboxamide synthase.